The primary structure comprises 206 residues: N-(5'-phosphoribosyl)anthranilate isomerase (206 aa).

The protein belongs to the TrpF family.

The enzyme catalyses N-(5-phospho-beta-D-ribosyl)anthranilate = 1-(2-carboxyphenylamino)-1-deoxy-D-ribulose 5-phosphate. It participates in amino-acid biosynthesis; L-tryptophan biosynthesis; L-tryptophan from chorismate: step 3/5. The chain is N-(5'-phosphoribosyl)anthranilate isomerase from Citrifermentans bemidjiense (strain ATCC BAA-1014 / DSM 16622 / JCM 12645 / Bem) (Geobacter bemidjiensis).